The following is a 253-amino-acid chain: uncharacterized protein (253 aa).

Residues 1–14 are compositionally biased toward low complexity; that stretch reads MKVPILSRLRSLSS. Disordered stretches follow at residues 1–192 and 212–253; these read MKVP…PKSS and PETV…AIQL. Composition is skewed to basic and acidic residues over residues 17–30 and 45–60; these read RNNE…EHQV and KSDK…KSGE. 2 stretches are compositionally biased toward low complexity: residues 63-104 and 111-154; these read PSTP…GSDS and KTLS…QTPR. Over residues 215-235 the composition is skewed to polar residues; the sequence is VVTSTPRQQSRPPSAQNTPNF. A compositionally biased stretch (low complexity) spans 236-253; that stretch reads TSQGGSRSTSRRQSAIQL.

This is an uncharacterized protein from Dictyostelium discoideum (Social amoeba).